Reading from the N-terminus, the 245-residue chain is tRNA pseudouridine synthase A (245 aa).

D52 acts as the Nucleophile in catalysis. Y111 contributes to the substrate binding site.

The protein belongs to the tRNA pseudouridine synthase TruA family. As to quaternary structure, homodimer.

It carries out the reaction uridine(38/39/40) in tRNA = pseudouridine(38/39/40) in tRNA. In terms of biological role, formation of pseudouridine at positions 38, 39 and 40 in the anticodon stem and loop of transfer RNAs. The chain is tRNA pseudouridine synthase A from Rickettsia typhi (strain ATCC VR-144 / Wilmington).